The chain runs to 34 residues: Photosystem II reaction center protein M (34 aa).

Residues 5–25 form a helical membrane-spanning segment; it reads ILGLIATALFIIIPTSFLLIL.

This sequence belongs to the PsbM family. PSII is composed of 1 copy each of membrane proteins PsbA, PsbB, PsbC, PsbD, PsbE, PsbF, PsbH, PsbI, PsbJ, PsbK, PsbL, PsbM, PsbT, PsbX, PsbY, PsbZ, Psb30/Ycf12, at least 3 peripheral proteins of the oxygen-evolving complex and a large number of cofactors. It forms dimeric complexes.

The protein localises to the plastid. Its subcellular location is the chloroplast thylakoid membrane. Functionally, one of the components of the core complex of photosystem II (PSII). PSII is a light-driven water:plastoquinone oxidoreductase that uses light energy to abstract electrons from H(2)O, generating O(2) and a proton gradient subsequently used for ATP formation. It consists of a core antenna complex that captures photons, and an electron transfer chain that converts photonic excitation into a charge separation. This subunit is found at the monomer-monomer interface. This chain is Photosystem II reaction center protein M, found in Nephroselmis olivacea (Green alga).